The sequence spans 1381 residues: Hepatocyte growth factor receptor (1381 aa).

The N-terminal stretch at 1–24 (MKAPTVLTPGILVLLFILVQRSNG) is a signal peptide. Over 25–932 (ECKEALTKSE…VIVQPDQNFT (908 aa)) the chain is Extracellular. A Sema domain is found at 27–515 (KEALTKSEMN…TGKKITKIPL (489 aa)). The N-linked (GlcNAc...) asparagine glycan is linked to Asn45. 4 disulfide bridges follow: Cys95/Cys101, Cys98/Cys160, Cys133/Cys141, and Cys172/Cys175. N-linked (GlcNAc...) asparagine glycosylation is present at Asn106. Asn149 carries an N-linked (GlcNAc...) asparagine glycan. The N-linked (GlcNAc...) asparagine glycan is linked to Asn202. Cystine bridges form between Cys298-Cys363 and Cys385-Cys397. Asn399 is a glycosylation site (N-linked (GlcNAc...) asparagine). 4 cysteine pairs are disulfide-bonded: Cys520–Cys538, Cys526–Cys561, Cys529–Cys545, and Cys541–Cys551. IPT/TIG domains are found at residues 563 to 655 (PTIY…FSYV), 657 to 739 (PIIT…FSYR), and 742 to 836 (PIVY…LIYV). Thr582 carries O-linked (Man) threonine glycosylation. Asn607 and Asn635 each carry an N-linked (GlcNAc...) asparagine glycan. Thr676 and Thr761 each carry an O-linked (Man) threonine glycan. N-linked (GlcNAc...) asparagine glycans are attached at residues Asn785, Asn879, and Asn930. A helical membrane pass occupies residues 933-955 (GLIAGVVSISIALLLLLGLFLWL). At 956-1381 (KKRKQIKDLG…QDNADGEVDT (426 aa)) the chain is on the cytoplasmic side. Position 966 is a phosphoserine (Ser966). Thr977 bears the Phosphothreonine mark. Ser990, Ser997, and Ser1000 each carry phosphoserine. Phosphotyrosine is present on Tyr1003. The Protein kinase domain maps to 1078–1345 (VHFNEVIGRG…RISAIFSAFI (268 aa)). Residues 1084–1092 (IGRGHFGCV) and Lys1110 contribute to the ATP site. Asp1204 acts as the Proton acceptor in catalysis. Residues 1212 to 1381 (LDEKFTVKVA…QDNADGEVDT (170 aa)) are interaction with RANBP9. Tyr1230 bears the Phosphotyrosine mark. Tyr1234 and Tyr1235 each carry phosphotyrosine; by autocatalysis. Phosphothreonine is present on Thr1289. The tract at residues 1320–1359 (WHPKAEMRPSFSELVSRISAIFSAFIGEHYVHVNATYVNV) is interaction with MUC20. 2 positions are modified to phosphotyrosine; by autocatalysis: Tyr1349 and Tyr1356. Tyr1365 is subject to Phosphotyrosine.

This sequence belongs to the protein kinase superfamily. Tyr protein kinase family. As to quaternary structure, heterodimer made of an alpha chain (50 kDa) and a beta chain (145 kDa) which are disulfide linked. Binds PLXNB1. Interacts when phosphorylated with downstream effectors including STAT3, PIK3R1, SRC, PCLG1, GRB2 and GAB1. Interacts with SPSB1, SPSB2 and SPSB4. Interacts with INPP5D/SHIP1. When phosphorylated at Tyr-1356, interacts with INPPL1/SHIP2. Interacts with RANBP9 and RANBP10, as well as SPSB1, SPSB2, SPSB3 and SPSB4. SPSB1 binding occurs in the presence and in the absence of HGF, however HGF treatment has a positive effect on this interaction. Interacts with MUC20; prevents interaction with GRB2 and suppresses hepatocyte growth factor-induced cell proliferation. Interacts with GRB10. Interacts with PTPN1 and PTPN2. Interacts with tensin TNS3. Interacts (when phosphorylated) with tensin TNS4 (via SH2 domain); the interaction increases MET protein stability by inhibiting MET endocytosis and subsequent lysosomal degradation. Post-translationally, autophosphorylated in response to ligand binding on Tyr-1234 and Tyr-1235 in the kinase domain leading to further phosphorylation of Tyr-1349 and Tyr-1356 in the C-terminal multifunctional docking site. Dephosphorylated by PTPRJ at Tyr-1349 and Tyr-1365. Dephosphorylated by PTPN1 and PTPN2. In terms of processing, ubiquitinated. Ubiquitination by CBL regulates the receptor stability and activity through proteasomal degradation. O-mannosylation of IPT/TIG domains by TMEM260 is required for protein maturation. O-mannosylated residues are composed of single mannose glycans that are not elongated or modified.

It is found in the membrane. It catalyses the reaction L-tyrosyl-[protein] + ATP = O-phospho-L-tyrosyl-[protein] + ADP + H(+). In its inactive state, the C-terminal tail interacts with the catalytic domain and inhibits the kinase activity. Upon ligand binding, the C-terminal tail is displaced and becomes phosphorylated, thus increasing the kinase activity. In terms of biological role, receptor tyrosine kinase that transduces signals from the extracellular matrix into the cytoplasm by binding to hepatocyte growth factor/HGF ligand. Regulates many physiological processes including proliferation, scattering, morphogenesis and survival. Ligand binding at the cell surface induces autophosphorylation of MET on its intracellular domain that provides docking sites for downstream signaling molecules. Following activation by ligand, interacts with the PI3-kinase subunit PIK3R1, PLCG1, SRC, GRB2, STAT3 or the adapter GAB1. Recruitment of these downstream effectors by MET leads to the activation of several signaling cascades including the RAS-ERK, PI3 kinase-AKT, or PLCgamma-PKC. The RAS-ERK activation is associated with the morphogenetic effects while PI3K/AKT coordinates prosurvival effects. During embryonic development, MET signaling plays a role in gastrulation, development and migration of muscles and neuronal precursors, angiogenesis and kidney formation. In adults, participates in wound healing as well as organ regeneration and tissue remodeling. Also promotes differentiation and proliferation of hematopoietic cells. The polypeptide is Hepatocyte growth factor receptor (MET) (Ateles geoffroyi (Black-handed spider monkey)).